Here is a 1196-residue protein sequence, read N- to C-terminus: MSKKSVEIEDVNNTYDQEAHFALLDLFFEKDKQVLVKHHIDSFNQFIEEIIPNILQGGDNVISEKATENKIIRYRLTFNDLGIKPPTLENEENLLYPLDAIRKQISYSAKYTATVTQWQDIVDIDTKKTETRIIGSPEKDVPIAKIPIMVLSKYCNLTLRPDIAGKHCKYDAGGYFIVNGSEKVVLSVESMIPRKPVVFTQRDQNSLLYYVRVQSIPASQFVGNPQLFTVKMKRDNSIILSIPHFKEVSIFTFIRALGIETDEDIVDSILDVKKEKDLLNLLSICMNSSNTPSVTKEEALEIMANQIKSTKTFTDTNPEVKAEQRRRYLDKIMTQFVLPHITSGTGDPEIDKIYKAHYICYMIHKLLKCYLRGAREVEEYRGCDDRDSMVNKRIDLTGRLLGGLFKQFYDKMLNDCNKIFRTKNIDDKKPPNIIPHIKPNSIEQGLRQALSTGNFGSQSRKGLSQMLNRMNHLHSLSYMRRVITPTVDASTMKMTSPRHLHNTQYGSMCPLESPEGKPKTGLVKNMAMMEGITINMNSQIPIIESYLIGKITTLESANKKRLHQYVKVFLNGNWLGVTRNIIKIHNDLRAMRFRGELSRMVGLVLNYKTAEFHIYTDGGRLIRPYLTVTDNKLNFKPEMLDEVNSWEEFLAKFPEVIEYVDKEEEQNIMLAVFPQYIQDANRIMSKKPINSRDQLNKINRTNRYDDNVYVRYTHCEIHPCMILGLISSNIPFPDHNQSPRGIFQYNQARQAMGLYISDYRERTDISYILYHPQIPLVTSRASKYTGTHIFPAGENSIVAIASYTGLMNQEDSLVINDSAIQKGYMRAQALKKYMEIIKKNPASSQTSIFMKPDRNKVDNLRDANYDKLSEEGYAKVETVIRDGDVVIGVVNPKPTAREDEKQYKDASSIYKSLIPGAVDKVITEVNNDGYPIIKMRIRSERIPNVGDKFSSRAGQKGTIGYKAHRADMLFSKSGLIPDIIINPNCMPKRMTIGQLIECLLGKLCAVKGVYGDATPFTSVDLNAINDELVAAGYEEWGNETMYNGMNGKKLPVKIFIGPTYYQRLKQMVGDKAHSRARGPTQLLTRQAPEGRSRDGGLRIGFEMERDALCAHGVAQFLKEKTVDNSDIYTCHVCDSCGQFAHKVPEKKYYTCTGCRNTTSISKIVIPYAFKLLLQELASINILGKIRTSKTIATPRG.

The tract at residues 1074–1095 (SRARGPTQLLTRQAPEGRSRDG) is disordered. Residues 1133 to 1154 (CDSCGQFAHKVPEKKYYTCTGC) form a C4-type zinc finger.

It belongs to the RNA polymerase beta chain family.

It is found in the virion. It catalyses the reaction RNA(n) + a ribonucleoside 5'-triphosphate = RNA(n+1) + diphosphate. In terms of biological role, DNA-dependent RNA polymerase catalyzes the transcription of DNA into RNA using the four ribonucleoside triphosphates as substrates. The chain is DNA-directed RNA polymerase subunit 2 (RPO2) from Acanthamoeba polyphaga mimivirus (APMV).